Here is a 261-residue protein sequence, read N- to C-terminus: Imidazole glycerol phosphate synthase subunit HisF (261 aa).

Catalysis depends on residues aspartate 16 and aspartate 135.

Belongs to the HisA/HisF family. Heterodimer of HisH and HisF.

The protein localises to the cytoplasm. It catalyses the reaction 5-[(5-phospho-1-deoxy-D-ribulos-1-ylimino)methylamino]-1-(5-phospho-beta-D-ribosyl)imidazole-4-carboxamide + L-glutamine = D-erythro-1-(imidazol-4-yl)glycerol 3-phosphate + 5-amino-1-(5-phospho-beta-D-ribosyl)imidazole-4-carboxamide + L-glutamate + H(+). It participates in amino-acid biosynthesis; L-histidine biosynthesis; L-histidine from 5-phospho-alpha-D-ribose 1-diphosphate: step 5/9. Its function is as follows. IGPS catalyzes the conversion of PRFAR and glutamine to IGP, AICAR and glutamate. The HisF subunit catalyzes the cyclization activity that produces IGP and AICAR from PRFAR using the ammonia provided by the HisH subunit. The protein is Imidazole glycerol phosphate synthase subunit HisF of Mycolicibacterium gilvum (strain PYR-GCK) (Mycobacterium gilvum (strain PYR-GCK)).